A 144-amino-acid polypeptide reads, in one-letter code: Large ribosomal subunit protein uL15 (144 aa).

A disordered region spans residues methionine 1 to arginine 48.

It belongs to the universal ribosomal protein uL15 family. In terms of assembly, part of the 50S ribosomal subunit.

Binds to the 23S rRNA. The protein is Large ribosomal subunit protein uL15 of Chlamydia trachomatis serovar L2 (strain ATCC VR-902B / DSM 19102 / 434/Bu).